Here is a 65-residue protein sequence, read N- to C-terminus: Large ribosomal subunit protein bL35 (65 aa).

This sequence belongs to the bacterial ribosomal protein bL35 family.

The chain is Large ribosomal subunit protein bL35 from Baumannia cicadellinicola subsp. Homalodisca coagulata.